The chain runs to 693 residues: tRNA (guanine(27)-N(2))-dimethyltransferase (693 aa).

A Nucleolar localization signal motif is present at residues 95 to 99 (HKLRR). The segment at 144–166 (YHCIICSATITRRTDMLGHVRRH) adopts a C2H2-type zinc-finger fold. The Trm1 methyltransferase domain occupies 187–648 (EILKEADTDV…APLMQFKSIL (462 aa)). S-adenosyl-L-methionine is bound by residues Arg-220, Asp-267, Asp-317, and Ala-318. 4 residues coordinate Zn(2+): Cys-448, Cys-451, Cys-473, and Cys-475. Residue Lys-545 forms a Glycyl lysine isopeptide (Lys-Gly) (interchain with G-Cter in SUMO2) linkage. Residues Ser-572 and Ser-667 each carry the phosphoserine modification.

It belongs to the class I-like SAM-binding methyltransferase superfamily. Trm1 family.

The protein localises to the nucleus. It localises to the nucleolus. It carries out the reaction guanosine(27) in tRNA(Tyr) + 2 S-adenosyl-L-methionine = N(2)-dimethylguanosine(27) in tRNA(Tyr) + 2 S-adenosyl-L-homocysteine + 2 H(+). Specifically dimethylates a single guanine residue at position 27 of tRNA(Tyr) using S-adenosyl-L-methionine as donor of the methyl groups. Dimethylation at position 27 of tRNA(Tyr) is required for efficient translation of tyrosine codons. Also required to maintain 3-(3-amino-3-carboxypropyl)uridine (acp3U) in the D-loop of several cytoplasmic tRNAs. The chain is tRNA (guanine(27)-N(2))-dimethyltransferase (TRMT1L) from Macaca fascicularis (Crab-eating macaque).